We begin with the raw amino-acid sequence, 548 residues long: Flagellin (548 aa).

It belongs to the bacterial flagellin family.

It is found in the secreted. The protein resides in the bacterial flagellum. Its function is as follows. Flagellin is the subunit protein which polymerizes to form the filaments of bacterial flagella. The polypeptide is Flagellin (fliC) (Escherichia coli O127:H6 (strain E2348/69 / EPEC)).